A 167-amino-acid chain; its full sequence is Large ribosomal subunit protein uL10 (167 aa).

The protein belongs to the universal ribosomal protein uL10 family. Part of the ribosomal stalk of the 50S ribosomal subunit. The N-terminus interacts with L11 and the large rRNA to form the base of the stalk. The C-terminus forms an elongated spine to which L12 dimers bind in a sequential fashion forming a multimeric L10(L12)X complex.

Its function is as follows. Forms part of the ribosomal stalk, playing a central role in the interaction of the ribosome with GTP-bound translation factors. The sequence is that of Large ribosomal subunit protein uL10 from Cytophaga hutchinsonii (strain ATCC 33406 / DSM 1761 / CIP 103989 / NBRC 15051 / NCIMB 9469 / D465).